The chain runs to 432 residues: MRVVILGSGVVGVTSAWYLCQAGHDVTVIDREPGPALETSAANAGQISPGYAAPWAAPGVPLKAIKWMFQRHAPLAVRLDGTQFQLKWMWQMLRNCDTRHYMENKGRMVRLAEYSRDCLKALRASTGIQYEGRQGGTLQLFRTAQQYENATRDIAVLEDAGVPYQLLESSRLAEVEPALAEVAHKLTGGLRLPNDETGDCQLFTQRLAQMAEQAGVTFRFNTPVEKLLYEGEQIYGVKCGDDIIKADAYVMAFGSYSTAMLKGIVDIPVYPLKGYSLTIPVAQDDGAPVSTILDETYKIAITRFDKRIRVGGMAEIVGFNTELLQPRRETLEMVVRDLFPRGGHVEQATFWTGLRPMTPDGTPVIGRTRFKNLWLNTGHGTLGWTMACGSGQLLSDILSGRTPAIPYDDLSVARYSPGFTPSRPRHLHGAHN.

3–17 lines the FAD pocket; the sequence is VVILGSGVVGVTSAW.

This sequence belongs to the DadA oxidoreductase family. Requires FAD as cofactor.

It catalyses the reaction a D-alpha-amino acid + A + H2O = a 2-oxocarboxylate + AH2 + NH4(+). It functions in the pathway amino-acid degradation; D-alanine degradation; NH(3) and pyruvate from D-alanine: step 1/1. Functionally, oxidative deamination of D-amino acids. In Citrobacter koseri (strain ATCC BAA-895 / CDC 4225-83 / SGSC4696), this protein is D-amino acid dehydrogenase.